The following is a 341-amino-acid chain: Chitin synthase 3 complex protein CSI2 (341 aa).

Residues 35–70 are compositionally biased toward low complexity; the sequence is SSSTKAADSSSKGSSSAKTTTSLGKSSVTSKDVSSS. Disordered regions lie at residues 35–78, 272–291, and 298–341; these read SSST…SSTK, DSLS…GKFT, and NYTS…DGKE.

Functionally, appears to be a structural component of the chitin synthase 3 complex. The polypeptide is Chitin synthase 3 complex protein CSI2 (CSI2) (Saccharomyces cerevisiae (strain ATCC 204508 / S288c) (Baker's yeast)).